Reading from the N-terminus, the 656-residue chain is Protein terminal ear1 (656 aa).

Positions 211-283 (SLVVLSPLPG…RRLVVEFTRP (73 aa)) constitute an RRM domain. 2 disordered regions span residues 280-408 (FTRP…WKGR) and 576-656 (LTDP…GYDD). Basic residues predominate over residues 288-299 (PRRRGYAPHQHR). Positions 314–331 (PSQPTSSQPPASSSSSGS) are enriched in low complexity. Over residues 346 to 358 (CKSSAGSDQSSKG) the composition is skewed to polar residues. 3 stretches are compositionally biased toward low complexity: residues 377–397 (AAAA…QKGV), 585–601 (RSPA…SRAA), and 612–630 (PAPS…STHA). Over residues 642-656 (DIRLAGELRRLGYDD) the composition is skewed to basic and acidic residues.

In terms of tissue distribution, expressed below the shoot tip down the flanks of shoot apex in an alternating pattern. Not expressed in root tips, leaves or immature ears (female inflorescences).

Its function is as follows. Probable RNA-binding protein. Involved in the regulation of leaf initiation rate and shoot development. Seems to act more predominantly in the early stages of the leaf development, rather than in the later phase. The chain is Protein terminal ear1 (TE1) from Zea mays (Maize).